A 348-amino-acid polypeptide reads, in one-letter code: Holliday junction branch migration complex subunit RuvB (348 aa).

Positions 4 to 184 (ADRLIAASGR…FGIVQRLEFY (181 aa)) are large ATPase domain (RuvB-L). ATP contacts are provided by residues Ile-23, Arg-24, Gly-65, Lys-68, Thr-69, Thr-70, 131-133 (EDF), Arg-174, Tyr-184, and Arg-221. Position 69 (Thr-69) interacts with Mg(2+). The tract at residues 185–255 (SDKDLATIVS…VADLALNLLD (71 aa)) is small ATPAse domain (RuvB-S). The segment at 258–348 (ERGFDHSDRR…GADFSEAGDE (91 aa)) is head domain (RuvB-H). Arg-294, Arg-313, and Arg-318 together coordinate DNA.

This sequence belongs to the RuvB family. As to quaternary structure, homohexamer. Forms an RuvA(8)-RuvB(12)-Holliday junction (HJ) complex. HJ DNA is sandwiched between 2 RuvA tetramers; dsDNA enters through RuvA and exits via RuvB. An RuvB hexamer assembles on each DNA strand where it exits the tetramer. Each RuvB hexamer is contacted by two RuvA subunits (via domain III) on 2 adjacent RuvB subunits; this complex drives branch migration. In the full resolvosome a probable DNA-RuvA(4)-RuvB(12)-RuvC(2) complex forms which resolves the HJ.

The protein localises to the cytoplasm. The enzyme catalyses ATP + H2O = ADP + phosphate + H(+). The RuvA-RuvB-RuvC complex processes Holliday junction (HJ) DNA during genetic recombination and DNA repair, while the RuvA-RuvB complex plays an important role in the rescue of blocked DNA replication forks via replication fork reversal (RFR). RuvA specifically binds to HJ cruciform DNA, conferring on it an open structure. The RuvB hexamer acts as an ATP-dependent pump, pulling dsDNA into and through the RuvAB complex. RuvB forms 2 homohexamers on either side of HJ DNA bound by 1 or 2 RuvA tetramers; 4 subunits per hexamer contact DNA at a time. Coordinated motions by a converter formed by DNA-disengaged RuvB subunits stimulates ATP hydrolysis and nucleotide exchange. Immobilization of the converter enables RuvB to convert the ATP-contained energy into a lever motion, pulling 2 nucleotides of DNA out of the RuvA tetramer per ATP hydrolyzed, thus driving DNA branch migration. The RuvB motors rotate together with the DNA substrate, which together with the progressing nucleotide cycle form the mechanistic basis for DNA recombination by continuous HJ branch migration. Branch migration allows RuvC to scan DNA until it finds its consensus sequence, where it cleaves and resolves cruciform DNA. The protein is Holliday junction branch migration complex subunit RuvB of Pseudomonas putida (strain W619).